Here is a 178-residue protein sequence, read N- to C-terminus: FMN reductase (NADH) RutF (178 aa).

The protein belongs to the non-flavoprotein flavin reductase family. RutF subfamily.

It catalyses the reaction FMNH2 + NAD(+) = FMN + NADH + 2 H(+). Its function is as follows. Catalyzes the reduction of FMN to FMNH2 which is used to reduce pyrimidine by RutA via the Rut pathway. The polypeptide is FMN reductase (NADH) RutF (Pseudomonas syringae pv. syringae (strain B728a)).